We begin with the raw amino-acid sequence, 638 residues long: Signal recognition particle receptor subunit alpha (638 aa).

Disordered regions lie at residues 132 to 244 (APTT…GKKA) and 283 to 316 (GTGS…TKGT). 2 stretches are compositionally biased toward basic and acidic residues: residues 137-146 (KKFEDSEKAK) and 153-165 (IETR…EKAK). The residue at position 177 (serine 177) is a Phosphoserine. Basic and acidic residues predominate over residues 204 to 239 (LSKEELIRRKREEFIQKHGRGMEKSNKSTKSDAPKE). Position 284 is a phosphothreonine (threonine 284). Serine 296, serine 297, and serine 298 each carry phosphoserine. Polar residues predominate over residues 304–314 (AQNSTKPSATK). An NG domain region spans residues 419 to 636 (YVVTFCGVNG…NAKAVVAALM (218 aa)). GTP is bound at residue 425–432 (GVNGVGKS). Serine 473 carries the post-translational modification Phosphoserine. 520–524 (DTAGR) serves as a coordination point for GTP. A Phosphothreonine modification is found at threonine 578. A GTP-binding site is contributed by 588–591 (TKFD).

The protein belongs to the GTP-binding SRP family. As to quaternary structure, heterodimer with SRPRB. Interacts with the signal recognition particle (SRP) complex subunit SRP54. In terms of assembly, (Microbial infection) May interact with Zika virus strain Mr-766 non-structural protein 4A/NS4A. May interact with Zika virus French Polynesia 10087PF/2013 non-structural protein 4A/NS4A. (Microbial infection) May interact with Dengue virus DENV2 16681 non-structural protein 4A/NS4A.

It is found in the endoplasmic reticulum membrane. Component of the signal recognition particle (SRP) complex receptor (SR). Ensures, in conjunction with the SRP complex, the correct targeting of the nascent secretory proteins to the endoplasmic reticulum membrane system. Forms a guanosine 5'-triphosphate (GTP)-dependent complex with the SRP subunit SRP54. SRP receptor compaction and GTPase rearrangement drive SRP-mediated cotranslational protein translocation into the ER. This chain is Signal recognition particle receptor subunit alpha, found in Homo sapiens (Human).